The following is a 158-amino-acid chain: NADH-quinone oxidoreductase subunit B (158 aa).

The [4Fe-4S] cluster site is built by Cys-37, Cys-38, Cys-102, and Cys-132.

Belongs to the complex I 20 kDa subunit family. As to quaternary structure, NDH-1 is composed of 14 different subunits. Subunits NuoB, C, D, E, F, and G constitute the peripheral sector of the complex. Requires [4Fe-4S] cluster as cofactor.

It is found in the cell inner membrane. The enzyme catalyses a quinone + NADH + 5 H(+)(in) = a quinol + NAD(+) + 4 H(+)(out). Its function is as follows. NDH-1 shuttles electrons from NADH, via FMN and iron-sulfur (Fe-S) centers, to quinones in the respiratory chain. Couples the redox reaction to proton translocation (for every two electrons transferred, four hydrogen ions are translocated across the cytoplasmic membrane), and thus conserves the redox energy in a proton gradient. The chain is NADH-quinone oxidoreductase subunit B from Bordetella parapertussis (strain 12822 / ATCC BAA-587 / NCTC 13253).